Reading from the N-terminus, the 798-residue chain is Transferrin receptor protein 2 (798 aa).

The Cytoplasmic portion of the chain corresponds to 1-81 (MEQRWGLLRR…WAAAGRKAAP (81 aa)). Positions 23–26 (YRRV) match the Endocytosis signal motif. Residues 82–102 (YLVLITLLIFTGAFLLGYVAF) traverse the membrane as a helical; Signal-anchor for type II membrane protein segment. Topologically, residues 103–798 (RGSCQACGDS…GDVWNIDNNF (696 aa)) are extracellular. N-linked (GlcNAc...) asparagine glycans are attached at residues Asn235, Asn334, and Asn535.

It belongs to the peptidase M28 family. M28B subfamily. Predominantly expressed in liver. Also expressed in kidney, spleen, brain, lung, heart and muscle with very low expression in kidney, muscle and heart.

The protein resides in the cell membrane. It localises to the cytoplasm. Functionally, mediates cellular uptake of transferrin-bound iron in a non-iron dependent manner. May be involved in iron metabolism, hepatocyte function and erythrocyte differentiation. This chain is Transferrin receptor protein 2 (Tfr2), found in Mus musculus (Mouse).